The sequence spans 314 residues: tRNA dimethylallyltransferase (314 aa).

11 to 18 is an ATP binding site; sequence GPTAVGKT. 13–18 provides a ligand contact to substrate; it reads TAVGKT. The tract at residues 36–39 is interaction with substrate tRNA; sequence DSMQ.

This sequence belongs to the IPP transferase family. In terms of assembly, monomer. Mg(2+) serves as cofactor.

The catalysed reaction is adenosine(37) in tRNA + dimethylallyl diphosphate = N(6)-dimethylallyladenosine(37) in tRNA + diphosphate. Catalyzes the transfer of a dimethylallyl group onto the adenine at position 37 in tRNAs that read codons beginning with uridine, leading to the formation of N6-(dimethylallyl)adenosine (i(6)A). The sequence is that of tRNA dimethylallyltransferase from Bacillus anthracis.